The primary structure comprises 469 residues: Phenylalanine--tRNA ligase alpha subunit (469 aa).

L-phenylalanine contacts are provided by residues Thr309, 348 to 350, and Phe388; that span reads QLD. Glu390 contacts Mg(2+).

This sequence belongs to the class-II aminoacyl-tRNA synthetase family. Phe-tRNA synthetase alpha subunit type 2 subfamily. In terms of assembly, tetramer of two alpha and two beta subunits. Mg(2+) is required as a cofactor.

It is found in the cytoplasm. It carries out the reaction tRNA(Phe) + L-phenylalanine + ATP = L-phenylalanyl-tRNA(Phe) + AMP + diphosphate + H(+). The protein is Phenylalanine--tRNA ligase alpha subunit of Sulfurisphaera tokodaii (strain DSM 16993 / JCM 10545 / NBRC 100140 / 7) (Sulfolobus tokodaii).